Consider the following 430-residue polypeptide: Asparagine--tRNA ligase (430 aa).

This sequence belongs to the class-II aminoacyl-tRNA synthetase family. Homodimer.

The protein localises to the cytoplasm. It catalyses the reaction tRNA(Asn) + L-asparagine + ATP = L-asparaginyl-tRNA(Asn) + AMP + diphosphate + H(+). The polypeptide is Asparagine--tRNA ligase (Bacillus velezensis (strain DSM 23117 / BGSC 10A6 / LMG 26770 / FZB42) (Bacillus amyloliquefaciens subsp. plantarum)).